The sequence spans 430 residues: tRNA(Ile)-lysidine synthase (430 aa).

21 to 26 (SGGLDS) is an ATP binding site.

Belongs to the tRNA(Ile)-lysidine synthase family.

It is found in the cytoplasm. The catalysed reaction is cytidine(34) in tRNA(Ile2) + L-lysine + ATP = lysidine(34) in tRNA(Ile2) + AMP + diphosphate + H(+). Its function is as follows. Ligates lysine onto the cytidine present at position 34 of the AUA codon-specific tRNA(Ile) that contains the anticodon CAU, in an ATP-dependent manner. Cytidine is converted to lysidine, thus changing the amino acid specificity of the tRNA from methionine to isoleucine. This is tRNA(Ile)-lysidine synthase from Salmonella dublin (strain CT_02021853).